The following is a 194-amino-acid chain: SAYSvFN domain-containing protein 1 (194 aa).

Over residues 1–10 (MEQRLAEFRA) the composition is skewed to basic and acidic residues. Disordered stretches follow at residues 1–43 (MEQR…TPKA) and 58–104 (PPSA…LTPR). Over 1-116 (MEQRLAEFRA…SLLTSVTLLK (116 aa)) the chain is Cytoplasmic. Residues 22–32 (SASSQSTQTSG) show a composition bias toward polar residues. Positions 82–101 (PWSPAEEAPPPPQPPPPQPL) are enriched in pro residues. The middle helical (MH) stretch occupies residues 102-116 (TPRDRSLLTSVTLLK). The helical intramembrane region spans 117-137 (VLLWLVLLGLFVELEFGLAYF). The Cytoplasmic portion of the chain corresponds to 138–194 (VLSLFYWMYVGMRGPEEKMQGEKSAYSVFNPGCEAIQGSLTAEQLERELHLRPLPRR).

The protein belongs to the SAYSD1 family. In terms of assembly, associates (via N-terminus) with ribosomes.

It localises to the endoplasmic reticulum membrane. It is found in the cytoplasmic vesicle membrane. Ufmylation 'reader' component of a translocation-associated quality control pathway, a mechanism that takes place when a ribosome has stalled during translation, and which is required to degrade clogged substrates. Specifically recognizes and binds ufmylated ribosomes when a ribosome has stalled, promoting the transport of stalled nascent chain via the TRAPP complex to lysosomes for degradation. This chain is SAYSvFN domain-containing protein 1 (SAYSD1), found in Bos taurus (Bovine).